A 404-amino-acid polypeptide reads, in one-letter code: RNA exonuclease 3 (404 aa).

The span at 1–17 (MNNNAQNKRSLDDSNGN) shows a compositional bias: polar residues. Residues 1–29 (MNNNAQNKRSLDDSNGNDTKRPKQEDPKY) form a disordered region. The span at 18–28 (DTKRPKQEDPK) shows a compositional bias: basic and acidic residues. Positions 241–389 (VLGIDCEMGF…EDSIAAIDIV (149 aa)) constitute an Exonuclease domain.

The protein belongs to the REXO1/REXO3 family.

The protein localises to the cytoplasm. The protein resides in the nucleus. In terms of biological role, 3' to 5' exoribonuclease required for proper 3' end maturation of MRP RNA and of the U5L snRNA. In Candida albicans (strain SC5314 / ATCC MYA-2876) (Yeast), this protein is RNA exonuclease 3 (REX3).